Reading from the N-terminus, the 123-residue chain is uncharacterized protein (123 aa).

The segment at 76–97 is disordered; sequence ENNKRKKKSEGERVRSPRTFRG.

This is an uncharacterized protein from Saccharomyces cerevisiae (strain ATCC 204508 / S288c) (Baker's yeast).